Consider the following 452-residue polypeptide: Lamina-associated polypeptide 2, isoforms beta/delta/epsilon/gamma (452 aa).

A nucleoplasmic region spans residues 1 to 409 (MPEFLEDPSV…KSEKTKKRRS (409 aa)). An LEM-like domain is found at 5–48 (LEDPSVLTKDKLKSELVANNVTLPAGEQRKDVYVQLYLQHLTAR). Disordered regions lie at residues 48-111 (RNRP…DLDV) and 149-263 (REQG…RVET). Residues 49 to 108 (NRPPLAAGANSKGPPDFSSDEEREPTPVLGSGASVGRGRGAVGRKATKKTDKPRLEDKDD) form a linker region. Phosphoserine occurs at positions 59, 66, and 67. A Phosphothreonine modification is found at Thr74. Phosphoserine is present on residues Ser79 and Ser82. 2 positions are modified to omega-N-methylarginine: Arg85 and Arg87. Residues 96–105 (KKTDKPRLED) show a composition bias toward basic and acidic residues. Residues 109–153 (LDVTELSNEELLDQLVRYGVNPGPIVGTTRKLYEKKLLKLREQGT) enclose the LEM domain. An NAKAP95-binding N region spans residues 137–242 (TRKLYEKKLL…TSGSSTGGPL (106 aa)). Thr153 is subject to Phosphothreonine. The segment covering 154 to 177 (ESRSSTPLPTVSSSAENTRQNGSN) has biased composition (polar residues). A phosphoserine mark is found at Ser155 and Ser158. 2 positions are modified to phosphothreonine: Thr159 and Thr163. A phosphoserine mark is found at Ser165, Ser167, and Ser176. A compositionally biased stretch (basic and acidic residues) spans 178–202 (DSDRYSDNDEDSKIELKLEKREPLK). The residue at position 179 (Ser179) is a Phosphoserine; by PKC. A phosphoserine mark is found at Ser183 and Ser189. Lys206 carries the N6-acetyllysine modification. Phosphothreonine is present on Thr210. Residues Ser221 and Ser223 each carry the phosphoserine modification. Over residues 226-240 (GVTETEWTSGSSTGG) the composition is skewed to low complexity. Phosphoserine occurs at positions 249, 253, 264, 291, 305, and 306. The segment at 298-370 (TGNFKHASSI…SCRRPIKGAA (73 aa)) is binds lamins B. Residues 299–373 (GNFKHASSIL…RPIKGAAGRP (75 aa)) form an NAKAP95-binding C region. The residue at position 311 (Thr311) is a Phosphothreonine. Position 314 is a phosphoserine (Ser314). Residue Arg319 is modified to Citrulline. A phosphoserine mark is found at Ser361, Ser377, and Ser384. Residue Lys388 is modified to N6-acetyllysine. A Glycyl lysine isopeptide (Lys-Gly) (interchain with G-Cter in SUMO2) cross-link involves residue Lys400. Ser401 carries the post-translational modification Phosphoserine. A helical; Signal-anchor for type II membrane protein membrane pass occupies residues 410–430 (VPMWIKMLLFALVAVFLFLVY). Residues 431–452 (QAMETNQGNPFTNFLQDTKISN) are Lumenal-facing.

The protein belongs to the LEM family. Interacts with LMNB1, LMNB2, BANF1, AKAP8L, GMCL and chromosomes. Post-translationally, mitosis-specific phosphorylation specifically abolishes its binding to lamin B and chromosomes. Citrullinated by PADI4.

It localises to the nucleus inner membrane. Its subcellular location is the chromosome. In terms of biological role, may help direct the assembly of the nuclear lamina and thereby help maintain the structural organization of the nuclear envelope. Possible receptor for attachment of lamin filaments to the inner nuclear membrane. May be involved in the control of initiation of DNA replication through its interaction with NAKAP95. The chain is Lamina-associated polypeptide 2, isoforms beta/delta/epsilon/gamma (Tmpo) from Mus musculus (Mouse).